Reading from the N-terminus, the 241-residue chain is Carboxy-S-adenosyl-L-methionine synthase (241 aa).

Residues Tyr38, 63-65 (GCS), 88-89 (DN), 116-117 (DI), Asn131, and Arg198 each bind S-adenosyl-L-methionine.

Belongs to the class I-like SAM-binding methyltransferase superfamily. Cx-SAM synthase family. As to quaternary structure, homodimer.

It carries out the reaction prephenate + S-adenosyl-L-methionine = carboxy-S-adenosyl-L-methionine + 3-phenylpyruvate + H2O. Catalyzes the conversion of S-adenosyl-L-methionine (SAM) to carboxy-S-adenosyl-L-methionine (Cx-SAM). This Pasteurella multocida (strain Pm70) protein is Carboxy-S-adenosyl-L-methionine synthase.